Reading from the N-terminus, the 182-residue chain is ATP-dependent protease subunit HslV (182 aa).

The active site involves threonine 7. Glycine 162, cysteine 165, and threonine 168 together coordinate Na(+).

This sequence belongs to the peptidase T1B family. HslV subfamily. As to quaternary structure, a double ring-shaped homohexamer of HslV is capped on each side by a ring-shaped HslU homohexamer. The assembly of the HslU/HslV complex is dependent on binding of ATP.

The protein resides in the cytoplasm. The enzyme catalyses ATP-dependent cleavage of peptide bonds with broad specificity.. Its activity is regulated as follows. Allosterically activated by HslU binding. Protease subunit of a proteasome-like degradation complex believed to be a general protein degrading machinery. This chain is ATP-dependent protease subunit HslV, found in Legionella pneumophila (strain Lens).